A 174-amino-acid chain; its full sequence is RNA pyrophosphohydrolase (174 aa).

The Nudix hydrolase domain maps to 6–150 (GFRPNVGIVI…KREVYRRVMK (145 aa)). The Nudix box signature appears at 38–59 (GGVDDGETPEQAMFRELYEEIG).

Belongs to the Nudix hydrolase family. RppH subfamily. A divalent metal cation serves as cofactor.

In terms of biological role, accelerates the degradation of transcripts by removing pyrophosphate from the 5'-end of triphosphorylated RNA, leading to a more labile monophosphorylated state that can stimulate subsequent ribonuclease cleavage. In Tolumonas auensis (strain DSM 9187 / NBRC 110442 / TA 4), this protein is RNA pyrophosphohydrolase.